The primary structure comprises 61 residues: Large ribosomal subunit protein uL30 (61 aa).

The protein belongs to the universal ribosomal protein uL30 family. In terms of assembly, part of the 50S ribosomal subunit.

The chain is Large ribosomal subunit protein uL30 from Chlorobium luteolum (strain DSM 273 / BCRC 81028 / 2530) (Pelodictyon luteolum).